A 603-amino-acid chain; its full sequence is NADH-ubiquinone oxidoreductase chain 5 (603 aa).

16 helical membrane-spanning segments follow: residues 4 to 24 (YATM…GALI), 38 to 58 (SIIA…MCLD), 87 to 107 (MTFI…SLWY), 122 to 142 (LIFL…QLFI), 144 to 160 (WEGV…WWYA), 171 to 191 (AILY…WFLL), 211 to 233 (TPLL…HPWL), 241 to 261 (TPVS…FLLI), 272 to 292 (LIQT…AVCA), 301 to 320 (IVAF…IGIN), 325 to 347 (AFLH…GSII), 370 to 390 (STSL…TGFY), 405 to 422 (NAWA…TSAY), 457 to 477 (LTIG…PMST), 482 to 502 (IPLY…LTAL), and 582 to 602 (GMIK…LLLI).

It belongs to the complex I subunit 5 family. Core subunit of respiratory chain NADH dehydrogenase (Complex I) which is composed of 45 different subunits.

It is found in the mitochondrion inner membrane. It catalyses the reaction a ubiquinone + NADH + 5 H(+)(in) = a ubiquinol + NAD(+) + 4 H(+)(out). Core subunit of the mitochondrial membrane respiratory chain NADH dehydrogenase (Complex I) which catalyzes electron transfer from NADH through the respiratory chain, using ubiquinone as an electron acceptor. Essential for the catalytic activity and assembly of complex I. This is NADH-ubiquinone oxidoreductase chain 5 (MT-ND5) from Pan troglodytes (Chimpanzee).